Consider the following 216-residue polypeptide: Nucleoid occlusion factor SlmA (216 aa).

The tract at residues 1-23 is disordered; that stretch reads MAEQLTLDSIEPEPEKQSAKIEK. Over residues 13–23 the composition is skewed to basic and acidic residues; sequence EPEKQSAKIEK. The region spanning 28–88 is the HTH tetR-type domain; that stretch reads ERRQQVLTVL…ALIENIESSL (61 aa). Residues 51 to 70 constitute a DNA-binding region (H-T-H motif); it reads TTARLAKEVGVSEAALYRYF.

Belongs to the nucleoid occlusion factor SlmA family. Homodimer. Interacts with FtsZ.

Its subcellular location is the cytoplasm. The protein localises to the nucleoid. Its function is as follows. Required for nucleoid occlusion (NO) phenomenon, which prevents Z-ring formation and cell division over the nucleoid. Acts as a DNA-associated cell division inhibitor that binds simultaneously chromosomal DNA and FtsZ, and disrupts the assembly of FtsZ polymers. SlmA-DNA-binding sequences (SBS) are dispersed on non-Ter regions of the chromosome, preventing FtsZ polymerization at these regions. The chain is Nucleoid occlusion factor SlmA from Mannheimia succiniciproducens (strain KCTC 0769BP / MBEL55E).